We begin with the raw amino-acid sequence, 220 residues long: Ribosomal RNA large subunit methyltransferase E (220 aa).

S-adenosyl-L-methionine-binding residues include Gly60, Trp62, Asp92, Asp108, and Asp133. Lys173 functions as the Proton acceptor in the catalytic mechanism.

It belongs to the class I-like SAM-binding methyltransferase superfamily. RNA methyltransferase RlmE family.

It is found in the cytoplasm. The enzyme catalyses uridine(2552) in 23S rRNA + S-adenosyl-L-methionine = 2'-O-methyluridine(2552) in 23S rRNA + S-adenosyl-L-homocysteine + H(+). Specifically methylates the uridine in position 2552 of 23S rRNA at the 2'-O position of the ribose in the fully assembled 50S ribosomal subunit. The protein is Ribosomal RNA large subunit methyltransferase E of Paraburkholderia xenovorans (strain LB400).